A 573-amino-acid chain; its full sequence is MTNCKGRSTITKTNSKVHDREGFVNWTISLSTVQSDKFLNLLLSMVPVVYQINQDERHKKVNGVWQDGLQPAGHNYNVKSDQHVEYHHFSEQTFHGSNGHSPSSCSPKYDDFSSYNYCDGMDASETDAMLQEDNISSDSNEDIIVEGIRKQPKESSSIMALQILVPFLLAGFGTVTAGMVLDIVQHWDVFKNVTEVFILVPALLGLKGNLEMTLASRLSTAVNIGKMDSPIEKWNLIIGNLALKQVQATVVGFLAAVAAVILGWIPEGKYSFSHSILLCSSSVATAFIASLLQGIIMVGVIVGSKKTGINPDNVATPIAASFGDLITLAILAWISQGLYTCLETYYYVSPLVGAFFLALTPMGIVIAAKHPATRTVLHSGWEPVITAMIISSIGGLILDTTVSDPNLVGIVVYTPVINGIGGNLVAIQASRISTYLHLHSIPGELPEEAKGCYYPCRTYYGTGVNNKSAQVLLLLVIPGHLIFLYTIHLMKSGHTSLTPIFIAVYLFAALLQVFTLLWIADWMVHHFWKKGKDPDSFSIPYLTALGDLLGTALLAVGFHFLWLIGDRDGDVGD.

Topologically, residues 1–162 (MTNCKGRSTI…KESSSIMALQ (162 aa)) are extracellular. A helical membrane pass occupies residues 163 to 183 (ILVPFLLAGFGTVTAGMVLDI). Over 184-195 (VQHWDVFKNVTE) the chain is Cytoplasmic. Residues 196 to 216 (VFILVPALLGLKGNLEMTLAS) form a helical membrane-spanning segment. Topologically, residues 217-245 (RLSTAVNIGKMDSPIEKWNLIIGNLALKQ) are extracellular. Residues 246–266 (VQATVVGFLAAVAAVILGWIP) traverse the membrane as a helical segment. At 267–282 (EGKYSFSHSILLCSSS) the chain is on the cytoplasmic side. The helical transmembrane segment at 283-303 (VATAFIASLLQGIIMVGVIVG) threads the bilayer. The Extracellular segment spans residues 304 to 313 (SKKTGINPDN). A helical membrane pass occupies residues 314-334 (VATPIAASFGDLITLAILAWI). At 335 to 347 (SQGLYTCLETYYY) the chain is on the cytoplasmic side. Residues 348–368 (VSPLVGAFFLALTPMGIVIAA) form a helical membrane-spanning segment. The Extracellular segment spans residues 369 to 376 (KHPATRTV). A helical membrane pass occupies residues 377 to 397 (LHSGWEPVITAMIISSIGGLI). The Cytoplasmic portion of the chain corresponds to 398–406 (LDTTVSDPN). A helical membrane pass occupies residues 407–427 (LVGIVVYTPVINGIGGNLVAI). Residues 428 to 469 (QASRISTYLHLHSIPGELPEEAKGCYYPCRTYYGTGVNNKSA) lie on the Extracellular side of the membrane. A helical membrane pass occupies residues 470-490 (QVLLLLVIPGHLIFLYTIHLM). The Cytoplasmic segment spans residues 491–499 (KSGHTSLTP). Residues 500-520 (IFIAVYLFAALLQVFTLLWIA) traverse the membrane as a helical segment. Topologically, residues 521-543 (DWMVHHFWKKGKDPDSFSIPYLT) are extracellular. A helical transmembrane segment spans residues 544-564 (ALGDLLGTALLAVGFHFLWLI). Over 565 to 573 (GDRDGDVGD) the chain is Cytoplasmic.

Belongs to the SLC41A transporter family.

The protein localises to the cell membrane. The catalysed reaction is Mg(2+)(in) = Mg(2+)(out). The enzyme catalyses Mn(2+)(in) = Mn(2+)(out). It catalyses the reaction Co(2+)(in) = Co(2+)(out). It carries out the reaction Ni(2+)(in) = Ni(2+)(out). The catalysed reaction is Fe(2+)(in) = Fe(2+)(out). Its function is as follows. Acts as a plasma-membrane magnesium transporter. Can also mediate the transport of other divalent metal cations in an order of Ba(2+) &gt; Ni(2+) &gt; Co(2+) &gt; Fe(2+) &gt; Mn(2+). This Gallus gallus (Chicken) protein is Solute carrier family 41 member 2 (SLC41A2).